Consider the following 302-residue polypeptide: 4-hydroxy-tetrahydrodipicolinate synthase (302 aa).

T55 contributes to the pyruvate binding site. Catalysis depends on Y144, which acts as the Proton donor/acceptor. Catalysis depends on K172, which acts as the Schiff-base intermediate with substrate. Pyruvate is bound at residue V214.

It belongs to the DapA family. As to quaternary structure, homotetramer; dimer of dimers.

It is found in the cytoplasm. It catalyses the reaction L-aspartate 4-semialdehyde + pyruvate = (2S,4S)-4-hydroxy-2,3,4,5-tetrahydrodipicolinate + H2O + H(+). Its pathway is amino-acid biosynthesis; L-lysine biosynthesis via DAP pathway; (S)-tetrahydrodipicolinate from L-aspartate: step 3/4. Functionally, catalyzes the condensation of (S)-aspartate-beta-semialdehyde [(S)-ASA] and pyruvate to 4-hydroxy-tetrahydrodipicolinate (HTPA). The polypeptide is 4-hydroxy-tetrahydrodipicolinate synthase (Prochlorococcus marinus (strain NATL2A)).